Consider the following 155-residue polypeptide: Large ribosomal subunit protein eL24 (155 aa).

A disordered region spans residues 92-155; sequence AKRNMKPEVR…KSAPRVGGKR (64 aa). Over residues 96-117 the composition is skewed to basic and acidic residues; sequence MKPEVRKAQRDQAIKAAKEQKK. The segment covering 124-133 has biased composition (low complexity); sequence KASAPAPKAK.

Belongs to the eukaryotic ribosomal protein eL24 family.

The polypeptide is Large ribosomal subunit protein eL24 (RpL24) (Spodoptera frugiperda (Fall armyworm)).